A 537-amino-acid polypeptide reads, in one-letter code: 5,6-dihydroxyindole-2-carboxylic acid oxidase (537 aa).

The first 24 residues, 1–24, serve as a signal peptide directing secretion; it reads MKSYNVLPLAYISLFLMLFYQVWA. Residues 25–477 lie on the Lumenal, melanosome side of the membrane; sequence QFPRECANIE…WPGQEFTVSE (453 aa). 5 cysteine pairs are disulfide-bonded: C30-C41, C42-C65, C56-C99, C101-C110, and C113-C122. 2 N-linked (GlcNAc...) asparagine glycosylation sites follow: N96 and N104. A glycan (N-linked (GlcNAc...) asparagine) is linked at N181. Residues H192, H215, and H224 each contribute to the Zn(2+) site. 2 cysteine pairs are disulfide-bonded: C258–C261 and C290–C303. N304 and N350 each carry an N-linked (GlcNAc...) asparagine glycan. Zn(2+) is bound by residues H377 and H381. An N-linked (GlcNAc...) asparagine glycan is attached at N385. H404 provides a ligand contact to Zn(2+). A helical transmembrane segment spans residues 478-501; the sequence is IITIAVVAALLLVAAIFGVASCLI. Over 502–537 the chain is Cytoplasmic; that stretch reads RSRSTKNEANQPLLTDHYQRYAEDYEELPNPNHSMV.

Belongs to the tyrosinase family. In terms of assembly, monomer. Interacts with ATP7A. Interacts with SLC45A2. It depends on Cu(2+) as a cofactor. Zn(2+) is required as a cofactor. In terms of processing, glycosylated. As to expression, pigment cells.

It localises to the melanosome membrane. The catalysed reaction is 2 5,6-dihydroxyindole-2-carboxylate + O2 = 2 indole-5,6-quinone-2-carboxylate + 2 H2O. It functions in the pathway pigment biosynthesis; melanin biosynthesis. Its function is as follows. Plays a role in melanin biosynthesis. Catalyzes the oxidation of 5,6-dihydroxyindole-2-carboxylic acid (DHICA) into indole-5,6-quinone-2-carboxylic acid. May regulate or influence the type of melanin synthesized. Also to a lower extent, capable of hydroxylating tyrosine and producing melanin. This is 5,6-dihydroxyindole-2-carboxylic acid oxidase (Tyrp1) from Mus musculus (Mouse).